A 513-amino-acid chain; its full sequence is Na(+)/H(+) antiporter NhaB (513 aa).

A run of 12 helical transmembrane segments spans residues 23-43 (LALI…PFVA), 52-72 (IFTL…LLAI), 97-117 (LLLM…LFIF), 120-140 (LLLS…AAAF), 144-164 (FLDA…FYGI), 202-222 (LMMH…VGEP), 238-258 (FFLR…LTCL), 303-323 (AIIG…VGLI), 348-368 (TESL…AVII), 391-411 (LFYI…VGTI), 447-467 (ATPN…APLI), and 475-495 (VWMA…CVEF).

This sequence belongs to the NhaB Na(+)/H(+) (TC 2.A.34) antiporter family.

Its subcellular location is the cell inner membrane. The catalysed reaction is 2 Na(+)(in) + 3 H(+)(out) = 2 Na(+)(out) + 3 H(+)(in). Its function is as follows. Na(+)/H(+) antiporter that extrudes sodium in exchange for external protons. The polypeptide is Na(+)/H(+) antiporter NhaB (Escherichia coli O6:H1 (strain CFT073 / ATCC 700928 / UPEC)).